Here is a 193-residue protein sequence, read N- to C-terminus: Xanthine phosphoribosyltransferase (193 aa).

Positions 20 and 27 each coordinate xanthine. Residue 128 to 132 coordinates 5-phospho-alpha-D-ribose 1-diphosphate; that stretch reads ANGQA. Lysine 156 provides a ligand contact to xanthine.

Belongs to the purine/pyrimidine phosphoribosyltransferase family. Xpt subfamily. In terms of assembly, homodimer.

It is found in the cytoplasm. It catalyses the reaction XMP + diphosphate = xanthine + 5-phospho-alpha-D-ribose 1-diphosphate. Its pathway is purine metabolism; XMP biosynthesis via salvage pathway; XMP from xanthine: step 1/1. Functionally, converts the preformed base xanthine, a product of nucleic acid breakdown, to xanthosine 5'-monophosphate (XMP), so it can be reused for RNA or DNA synthesis. The polypeptide is Xanthine phosphoribosyltransferase (Streptococcus pyogenes serotype M5 (strain Manfredo)).